The following is an 83-amino-acid chain: Tetracenomycin polyketide synthase acyl carrier protein (83 aa).

The Carrier domain maps to 3–83; the sequence is QIGLPRLVEI…VNTETAGEVA (81 aa). Ser41 bears the O-(pantetheine 4'-phosphoryl)serine mark.

In terms of assembly, the tetracenomycin polyketide synthase (TCM PKS) is composed of a ketosynthase complex (TcmKL), an acyl carrier protein (TcmM), a cyclase (TcmN) and a probable second cyclase (TcmJ). It depends on pantetheine 4'-phosphate as a cofactor. In terms of processing, 4'-phosphopantetheine is transferred from CoA to a specific serine of apo-ACP.

The catalysed reaction is 10 malonyl-CoA + 8 H(+) = tetracenomycin F2 + 10 CO2 + 10 CoA + 2 H2O. It participates in antibiotic biosynthesis; tetracenomycin C biosynthesis. Its function is as follows. Involved in the biosynthesis of tetracenomycin C (TCM C). Part of a type II polyketide synthase (PKS) that catalyzes the synthesis of tetracenomycin F2 (TCM F2), a precursor of TCM C, from malonyl-CoA. TcmM is an acyl carrier protein that serves as an acceptor of malonate from malonyl-CoA and acts as the tether for the substrates and intermediates of polyketide assembly. The malonyl CoA-acyl carrier protein transacylase FabD (MCT) is required to catalyze the transacylation between malonyl-CoA and TcmM, although a relatively slow spontaneous self-malonylation of TcmM also occurs in a reaction without the MCT. The polypeptide is Tetracenomycin polyketide synthase acyl carrier protein (Streptomyces glaucescens).